Here is a 327-residue protein sequence, read N- to C-terminus: Petrobactin synthase (327 aa).

It carries out the reaction N(8)-citryl-spermidine + 3,4-dihydroxybenzoyl-[aryl-carrier protein] = N(1)-(3,4-dihydroxybenzoyl)-N(8)-citryl-spermidine + holo-[aryl-carrier protein] + H(+). It catalyses the reaction N(8),N'(8)-citryl-bis(spermidine) + 3,4-dihydroxybenzoyl-[aryl-carrier protein] = N(1)-(3,4-dihydroxybenzoyl)-N(8),N'(8)-citryl-bis(spermidine) + holo-[aryl-carrier protein] + H(+). The catalysed reaction is N(1)-(3,4-dihydroxybenzoyl)-N(8),N'(8)-citryl-bis(spermidine) + 3,4-dihydroxybenzoyl-[aryl-carrier protein] = petrobactin + holo-[aryl-carrier protein] + H(+). The protein operates within siderophore biosynthesis; petrobactin biosynthesis. In terms of biological role, involved in the biosynthesis of petrobactin, a catecholate siderophore that functions in both iron acquisition and virulence. Transfers the activated 3,4-dihydroxybenzoate (3,4-DHBA) moiety from 3,4-DHBA-loaded AsbD to different receipient molecules, including N-citryl-spermidine, N8,N'8-citryl-bis(spermidine) and N1-(3,4-dihydroxybenzoyl)-N8,N'8-citryl-bis(spermidine). Also catalyzes the transfer of the activated 3,4-DHBA moiety from 3,4-DHBA-loaded AsbD to spermidine to generate DHB-spermidine (DHB-SP). This is Petrobactin synthase from Bacillus anthracis.